The sequence spans 225 residues: MSNETNCTLDFEQSVELFKEYNLFITAFLLFLTIILQYGYATRIRFIYILKMIVLWCFWPLNIAVGVISCIYPPNTGGLVAAIILTVFACLSFVGYWIQSCRLFKRCRSWWSFNPESNAVGSILLTNGQQCNFAIESVPMVLAPIIKNGVLYCEGQWLAKCEPDHLPKDIFVCTADRRNIYRMVQKYTGDQSGNKKRFATFVYAKQSVDTGELESVATGGSSLYT.

Topologically, residues 1–20 are virion surface; the sequence is MSNETNCTLDFEQSVELFKE. Residues 21–41 form a helical membrane-spanning segment; the sequence is YNLFITAFLLFLTIILQYGYA. At 42–51 the chain is on the intravirion side; sequence TRIRFIYILK. Residues 52–72 form a helical membrane-spanning segment; it reads MIVLWCFWPLNIAVGVISCIY. At 73 to 77 the chain is on the virion surface side; the sequence is PPNTG. The chain crosses the membrane as a helical span at residues 78-98; that stretch reads GLVAAIILTVFACLSFVGYWI. The Intravirion portion of the chain corresponds to 99 to 225; it reads QSCRLFKRCR…VATGGSSLYT (127 aa).

This sequence belongs to the gammacoronaviruses M protein family. As to quaternary structure, homomultimer. Interacts with envelope E protein in the budding compartment of the host cell, which is located between endoplasmic reticulum and the Golgi complex. Forms a complex with HE and S proteins. Interacts with nucleocapsid N protein. This interaction probably participates in RNA packaging into the virus.

Its subcellular location is the virion membrane. It localises to the host Golgi apparatus membrane. Functionally, component of the viral envelope that plays a central role in virus morphogenesis and assembly via its interactions with other viral proteins. This is Membrane protein from Avian infectious bronchitis virus (strain KB8523) (IBV).